The primary structure comprises 363 residues: Mitochondrial phosphate carrier protein 2, mitochondrial (363 aa).

The helical transmembrane segment at 65 to 85 threads the bilayer; the sequence is AYFAACTVAGMLSCGITHTAI. 3 Solcar repeats span residues 65-149, 162-246, and 263-342; these read AYFA…AKKY, YKTL…TVEL, and VQLG…VKVL. The Mitochondrial matrix portion of the chain corresponds to 86-123; sequence TPLDVIKCNMQIDPLKYKNITSAFKTTIKEQGLKGFTR. Residues 124–143 traverse the membrane as a helical segment; sequence GWSPTLLGYSAQGAFKYGLY. At 144-164 the chain is on the mitochondrial intermembrane side; it reads EYAKKYYSDIVGPEYAAKYKT. The helical transmembrane segment at 165-185 threads the bilayer; sequence LIYLAGSASAEIVADVALCPM. Over 186 to 220 the chain is Mitochondrial matrix; it reads EAVKVRVQTQPGFARGLSDGLPKIIKSEGFRGLHK. The helical transmembrane segment at 221–240 threads the bilayer; the sequence is GLVPLWGRQIPYTMMKFATF. Residues 241–261 lie on the Mitochondrial intermembrane side of the membrane; that stretch reads ENTVELIYKKVMPTPKEECSK. Residues 262–282 traverse the membrane as a helical segment; sequence PVQLGVSFAGGYIAGIFCAII. The Mitochondrial matrix portion of the chain corresponds to 283–321; that stretch reads SHPADNLVSFLNNSKGATVADAVKRLGLWGMLTRGLPLR. The helical transmembrane segment at 322–342 threads the bilayer; sequence IFMIGTLTGAQWVIYDAVKVL. Topologically, residues 343-363 are mitochondrial intermembrane; the sequence is AGLPTTGGASPATALAPSVSA.

It belongs to the mitochondrial carrier (TC 2.A.29) family. In terms of tissue distribution, expressed in leaves. Strong expression in senescent leaves.

Its subcellular location is the mitochondrion inner membrane. In terms of biological role, transport of phosphate groups from the cytosol to the mitochondrial matrix. Mediates salt stress tolerance through an ATP-dependent pathway and via modulation of the gibberellin metabolism. The protein is Mitochondrial phosphate carrier protein 2, mitochondrial (MPT2) of Arabidopsis thaliana (Mouse-ear cress).